A 219-amino-acid chain; its full sequence is Large ribosomal subunit protein uL16 (219 aa).

Belongs to the universal ribosomal protein uL16 family. In terms of assembly, component of the small ribosomal subunit. Mature ribosomes consist of a small (40S) and a large (60S) subunit. The 40S subunit contains about 33 different proteins and 1 molecule of RNA (18S). The 60S subunit contains about 49 different proteins and 3 molecules of RNA (25S, 5.8S and 5S).

This chain is Large ribosomal subunit protein uL16 (RPL10), found in Solanum melongena (Eggplant).